The chain runs to 132 residues: Small ribosomal subunit protein uS11 (132 aa).

Belongs to the universal ribosomal protein uS11 family. In terms of assembly, part of the 30S ribosomal subunit. Interacts with proteins S7 and S18. Binds to IF-3.

Located on the platform of the 30S subunit, it bridges several disparate RNA helices of the 16S rRNA. Forms part of the Shine-Dalgarno cleft in the 70S ribosome. The sequence is that of Small ribosomal subunit protein uS11 from Chlamydia abortus (strain DSM 27085 / S26/3) (Chlamydophila abortus).